The primary structure comprises 103 residues: N(4)-acetylcytidine amidohydrolase (103 aa).

The ASCH domain maps to 6-101; it reads ITFFQRFQDD…QTQFYVIEFK (96 aa). Lysine 21 functions as the Proton acceptor in the catalytic mechanism. The active-site Nucleophile is the threonine 24. Catalysis depends on glutamate 74, which acts as the Proton donor.

It belongs to the N(4)-acetylcytidine amidohydrolase family.

The enzyme catalyses N(4)-acetylcytidine + H2O = cytidine + acetate + H(+). It catalyses the reaction N(4)-acetyl-2'-deoxycytidine + H2O = 2'-deoxycytidine + acetate + H(+). It carries out the reaction N(4)-acetylcytosine + H2O = cytosine + acetate + H(+). Catalyzes the hydrolysis of N(4)-acetylcytidine (ac4C). The polypeptide is N(4)-acetylcytidine amidohydrolase (yqfB) (Escherichia coli (strain K12 / MC4100 / BW2952)).